The sequence spans 327 residues: Biotin synthase (327 aa).

The Radical SAM core domain occupies 49–273; it reads FNKDKIDLCS…ICIARIALPD (225 aa). [4Fe-4S] cluster-binding residues include Cys-67, Cys-71, and Cys-74. Ser-110, Cys-142, Cys-201, and Arg-277 together coordinate [2Fe-2S] cluster.

It belongs to the radical SAM superfamily. Biotin synthase family. Homodimer. The cofactor is [4Fe-4S] cluster. It depends on [2Fe-2S] cluster as a cofactor.

It carries out the reaction (4R,5S)-dethiobiotin + (sulfur carrier)-SH + 2 reduced [2Fe-2S]-[ferredoxin] + 2 S-adenosyl-L-methionine = (sulfur carrier)-H + biotin + 2 5'-deoxyadenosine + 2 L-methionine + 2 oxidized [2Fe-2S]-[ferredoxin]. It functions in the pathway cofactor biosynthesis; biotin biosynthesis; biotin from 7,8-diaminononanoate: step 2/2. In terms of biological role, catalyzes the conversion of dethiobiotin (DTB) to biotin by the insertion of a sulfur atom into dethiobiotin via a radical-based mechanism. The chain is Biotin synthase from Methanococcus maripaludis (strain C6 / ATCC BAA-1332).